The chain runs to 171 residues: Sec-independent protein translocase protein TatB (171 aa).

The helical transmembrane segment at 1-21 (MFDIGFSELLLVFIIGLVVLG) threads the bilayer. The segment at 117 to 171 (KDNETAHEGVTPAAAQTQASSPEQKPETTPEPVVKPAADAEPKTAAPSPSSSDKP) is disordered. Over residues 130-139 (AAQTQASSPE) the composition is skewed to polar residues.

It belongs to the TatB family. As to quaternary structure, the Tat system comprises two distinct complexes: a TatABC complex, containing multiple copies of TatA, TatB and TatC subunits, and a separate TatA complex, containing only TatA subunits. Substrates initially bind to the TatABC complex, which probably triggers association of the separate TatA complex to form the active translocon.

Its subcellular location is the cell inner membrane. In terms of biological role, part of the twin-arginine translocation (Tat) system that transports large folded proteins containing a characteristic twin-arginine motif in their signal peptide across membranes. Together with TatC, TatB is part of a receptor directly interacting with Tat signal peptides. TatB may form an oligomeric binding site that transiently accommodates folded Tat precursor proteins before their translocation. The chain is Sec-independent protein translocase protein TatB from Escherichia coli O6:K15:H31 (strain 536 / UPEC).